Consider the following 226-residue polypeptide: Endonuclease V (226 aa).

Asp-43 and Asp-111 together coordinate Mg(2+).

This sequence belongs to the endonuclease V family. Mg(2+) is required as a cofactor.

The protein resides in the cytoplasm. The catalysed reaction is Endonucleolytic cleavage at apurinic or apyrimidinic sites to products with a 5'-phosphate.. DNA repair enzyme involved in the repair of deaminated bases. Selectively cleaves double-stranded DNA at the second phosphodiester bond 3' to a deoxyinosine leaving behind the intact lesion on the nicked DNA. This is Endonuclease V from Nocardia farcinica (strain IFM 10152).